The following is a 1381-amino-acid chain: Major capsid protein (1381 aa).

This sequence belongs to the herpesviridae major capsid protein family. As to quaternary structure, homomultimer. Makes the hexons and eleven out of twelve pentons. Interacts with triplex proteins 1/TRX1 and 2/TRX2; adjacent capsomers are linked together in groups of three by triplexes, heterotrimeric complexes composed of one molecule of TRX1 and two molecules of TRX2. Interacts with scaffold protein; this interaction allows efficient MCP transport to the host nucleus. Interacts with capsid vertex component 2/CVC2. Interacts with the small capsomere-interacting protein/SCP.

It is found in the virion. Its subcellular location is the host nucleus. Self-assembles to form an icosahedral capsid with a T=16 symmetry, about 200 nm in diameter, and consisting of 150 hexons and 12 pentons (total of 162 capsomers). Hexons form the edges and faces of the capsid and are each composed of six MCP molecules. In contrast, one penton is found at each of the 12 vertices. Eleven of the pentons are MCP pentamers, while the last vertex is occupied by the portal complex. The capsid is surrounded by a layer of proteinaceous material designated the tegument which, in turn, is enclosed in an envelope of host cell-derived lipids containing virus-encoded glycoproteins. The polypeptide is Major capsid protein (Epstein-Barr virus (strain AG876) (HHV-4)).